The following is a 155-amino-acid chain: Ribosomal RNA large subunit methyltransferase H (155 aa).

S-adenosyl-L-methionine is bound by residues leucine 73, glycine 104, and 123–128; that span reads ISKMTF.

Belongs to the RNA methyltransferase RlmH family. As to quaternary structure, homodimer.

The protein resides in the cytoplasm. The enzyme catalyses pseudouridine(1915) in 23S rRNA + S-adenosyl-L-methionine = N(3)-methylpseudouridine(1915) in 23S rRNA + S-adenosyl-L-homocysteine + H(+). Specifically methylates the pseudouridine at position 1915 (m3Psi1915) in 23S rRNA. The polypeptide is Ribosomal RNA large subunit methyltransferase H (Francisella tularensis subsp. novicida (strain U112)).